The following is a 137-amino-acid chain: Ribosome-binding factor A (137 aa).

Residues 110 to 137 (RIQQEKEGATDDRDQNDSGEDATPHSND) form a disordered region. Positions 112–125 (QQEKEGATDDRDQN) are enriched in basic and acidic residues.

This sequence belongs to the RbfA family. Monomer. Binds 30S ribosomal subunits, but not 50S ribosomal subunits or 70S ribosomes.

It localises to the cytoplasm. Its function is as follows. One of several proteins that assist in the late maturation steps of the functional core of the 30S ribosomal subunit. Associates with free 30S ribosomal subunits (but not with 30S subunits that are part of 70S ribosomes or polysomes). Required for efficient processing of 16S rRNA. May interact with the 5'-terminal helix region of 16S rRNA. This chain is Ribosome-binding factor A, found in Rhodopirellula baltica (strain DSM 10527 / NCIMB 13988 / SH1).